Here is a 679-residue protein sequence, read N- to C-terminus: Stress-70 protein, mitochondrial (679 aa).

The transit peptide at 1–46 (MISASRAAAARLVGTTASRSPAAARHQDGWNGLSHEAFRFVSRRDY) directs the protein to the mitochondrion. An interaction with NFS1 region spans residues 1 to 432 (MISASRAAAA…IQGGVLAGDV (432 aa)). The ADP site is built by T63 and N64. Positions 63-431 (TNSCVAVMEG…AIQGGVLAGD (369 aa)) are nucleotide-binding domain (NBD). At K76 the chain carries N6-acetyllysine. Phosphothreonine is present on T87. Residues K135 and K138 each carry the N6-acetyllysine; alternate modification. N6-succinyllysine; alternate occurs at positions 135 and 138. The residue at position 143 (K143) is an N6-acetyllysine. K206 bears the N6-acetyllysine; alternate mark. N6-succinyllysine; alternate is present on K206. An N6-malonyllysine; alternate modification is found at K206. N6-acetyllysine occurs at positions 234 and 288. K300 carries the N6-acetyllysine; alternate modification. K300 is subject to N6-succinyllysine; alternate. Residues E313, K316, and S320 each contribute to the ADP site. An N6-acetyllysine; alternate modification is found at K360. At K360 the chain carries N6-succinyllysine; alternate. K368 bears the N6-succinyllysine mark. The ADP site is built by G388 and R391. K394 carries the N6-succinyllysine modification. S408 is modified (phosphoserine). The tract at residues 432-441 (VTDVLLLDVT) is interdomain linker. Residues 432–679 (VTDVLLLDVT…QKEDQKEEKQ (248 aa)) form an interaction with FXN and ISCU region. The segment at 442 to 679 (PLSLGIETLG…QKEDQKEEKQ (238 aa)) is substrate-binding domain (SBD). R513 carries the post-translational modification Omega-N-methylarginine. K567 and K600 each carry N6-acetyllysine; alternate. N6-succinyllysine; alternate occurs at positions 567 and 600. At K610 the chain carries N6-succinyllysine. The residue at position 612 (K612) is an N6-acetyllysine. At K646 the chain carries N6-acetyllysine; alternate. The residue at position 646 (K646) is an N6-succinyllysine; alternate. A disordered region spans residues 655–679 (MASEREGSGSSSTGEQKEDQKEEKQ). A compositionally biased stretch (basic and acidic residues) spans 669–679 (EQKEDQKEEKQ).

This sequence belongs to the heat shock protein 70 family. In terms of assembly, interacts strongly with the intermediate form of FXN and weakly with its mature form. Interacts with HSCB. Associates with the mitochondrial contact site and cristae organizing system (MICOS) complex, composed of at least MICOS10/MIC10, CHCHD3/MIC19, CHCHD6/MIC25, APOOL/MIC27, IMMT/MIC60, APOO/MIC23/MIC26 and QIL1/MIC13. This complex was also known under the names MINOS or MitOS complex. The MICOS complex associates with mitochondrial outer membrane proteins SAMM50, MTX1, MTX2 and DNAJC11, mitochondrial inner membrane protein TMEM11 and with HSPA9. Interacts with DNLZ, the interaction is required to prevent self-aggregation. Interacts with TESPA1. Interacts with PDPN. Interacts with NFU1, NFS1 and ISCU. Interacts with TP53; the interaction promotes TP53 degradation. Interacts (via SBD domain) with UBXN2A; the interaction with UBXN2A inhibits HSPA9 interaction with and degradation of TP53, thereby promotes TP53 translocation to the nucleus. Interacts with ITPR1 AND VDAC1; this interaction couples ITPR1 to VDAC1. Component of the TIM23 mitochondrial inner membrane pre-sequence translocase complex.

It localises to the mitochondrion. The protein resides in the nucleus. The protein localises to the nucleolus. It is found in the cytoplasm. Its subcellular location is the mitochondrion matrix. The enzyme catalyses ATP + H2O = ADP + phosphate + H(+). Its activity is regulated as follows. The chaperone activity is regulated by ATP-induced allosteric coupling of the nucleotide-binding (NBD) and substrate-binding (SBD) domains. ATP binding in the nucleotide-binding pocket (NBP) leads to a conformational change in the NBD, which is transferred through the interdomain linker (IDL) to the substrate-binding domain (SBD). This elicits a reduced substrate affinity and a faster substrate exchange rate. Upon hydrolysis of ATP to ADP, the protein undergoes a conformational change that increases its affinity for substrate proteins. It cycles through repeated phases of ATP hydrolysis and nucleotide exchange, facilitating repeated cycles of substrate binding and release. Functions in collaboration with co-chaperones. Functions with the co-chaperone, DNLZ, to maintain solubility and regulate ATP hydrolysis. Nucleotide exchange factors, GRPEL1 and GRPEL2, accelerate nucleotide exchange. In terms of biological role, mitochondrial chaperone that plays a key role in mitochondrial protein import, folding, and assembly. Plays an essential role in the protein quality control system, the correct folding of proteins, the re-folding of misfolded proteins, and the targeting of proteins for subsequent degradation. These processes are achieved through cycles of ATP binding, ATP hydrolysis, and ADP release, mediated by co-chaperones. In mitochondria, it associates with the TIM (translocase of the inner membrane) protein complex to assist in the import and folding of mitochondrial proteins. Plays an important role in mitochondrial iron-sulfur cluster (ISC) biogenesis, interacts with and stabilizes ISC cluster assembly proteins FXN, NFU1, NFS1 and ISCU. Regulates erythropoiesis via stabilization of ISC assembly. Regulates mitochondrial calcium-dependent apoptosis by coupling two calcium channels, ITPR1 and VDAC1, at the mitochondria-associated endoplasmic reticulum (ER) membrane to facilitate calcium transport from the ER lumen to the mitochondria intermembrane space, providing calcium for the downstream calcium channel MCU, which releases it into the mitochondrial matrix. Although primarily located in the mitochondria, it is also found in other cellular compartments. In the cytosol, it associates with proteins involved in signaling, apoptosis, or senescence. It may play a role in cell cycle regulation via its interaction with and promotion of degradation of TP53. May play a role in the control of cell proliferation and cellular aging. Protects against reactive oxygen species (ROS). Extracellular HSPA9 plays a cytoprotective role by preventing cell lysis following immune attack by the membrane attack complex by disrupting formation of the complex. This is Stress-70 protein, mitochondrial from Rattus norvegicus (Rat).